The chain runs to 126 residues: Fluoride-specific ion channel FluC (126 aa).

The next 4 helical transmembrane spans lie at 7-24 (LWVSLGGIVGACARYFLS), 35-55 (FPWGTLLINITGSFVLGLFLV), 69-89 (LLIAIGFCGAYTTFSSYAYES), and 98-118 (WGLFAGNVLANNILCLAAVLG). Na(+)-binding residues include Gly77 and Thr80.

This sequence belongs to the fluoride channel Fluc/FEX (TC 1.A.43) family.

Its subcellular location is the cell inner membrane. It catalyses the reaction fluoride(in) = fluoride(out). Its activity is regulated as follows. Na(+) is not transported, but it plays an essential structural role and its presence is essential for fluoride channel function. Fluoride-specific ion channel. Important for reducing fluoride concentration in the cell, thus reducing its toxicity. The chain is Fluoride-specific ion channel FluC from Koribacter versatilis (strain Ellin345).